The primary structure comprises 251 residues: UPF0246 protein TM1040_2658 (251 aa).

This sequence belongs to the UPF0246 family.

This Ruegeria sp. (strain TM1040) (Silicibacter sp.) protein is UPF0246 protein TM1040_2658.